The chain runs to 1677 residues: ELMO domain-containing protein E (1677 aa).

Disordered stretches follow at residues 112 to 139 (TTTS…SSPS), 168 to 194 (NSKD…SNIK), 264 to 372 (QLHG…NTTE), 592 to 625 (DDDN…RSNS), 775 to 801 (PNSN…STNN), 888 to 947 (INKN…NQDI), 982 to 1002 (KIRS…SQPE), 1047 to 1075 (STNN…ETRS), 1122 to 1141 (KQKS…GNVS), 1197 to 1248 (NNNI…DNHA), 1261 to 1404 (DDDD…RKKR), 1434 to 1454 (SPGS…PQPE), 1467 to 1593 (KNPE…GDVS), and 1654 to 1677 (ESQR…SSSK). Low complexity-rich tracts occupy residues 115–139 (SSSS…SSPS) and 172–194 (TNNS…SNIK). Over residues 269 to 278 (SIGGGGGGSG) the composition is skewed to gly residues. 3 stretches are compositionally biased toward low complexity: residues 307–334 (SQSN…KPNN), 341–352 (TTTTTTTTTTTS), and 597–616 (NNNN…NNYN). Residues 492 to 710 (SHQILLSDLW…HTREIIEKVC (219 aa)) enclose the ELMO domain. The span at 891-903 (NGGGGGGGGGGGV) shows a compositional bias: gly residues. Positions 922-933 (IDDSDDENDNDE) are enriched in acidic residues. Low complexity-rich tracts occupy residues 934-946 (VNNN…INQD) and 985-996 (SSSSTPDTSSPP). The stretch at 1186-1212 (LLDDVLDLNQTNNNIDNENDDINEAII) forms a coiled coil. Over residues 1228 to 1238 (EEEEEEEEEEE) the composition is skewed to acidic residues. The span at 1285 to 1305 (NNTTTTTTTTTTTTTTTTNTT) shows a compositional bias: low complexity. Positions 1306–1334 (GQKRISILSTDTNRPGSSNYGESSLSNGS) are enriched in polar residues. Acidic residues predominate over residues 1387-1397 (DDEDDEDDDDK). Residues 1445–1454 (PHLSVSPQPE) show a composition bias toward polar residues. Composition is skewed to low complexity over residues 1475–1488 (LSSS…PLLS), 1503–1574 (SNLI…PSSS), and 1663–1677 (ASSS…SSSK).

This chain is ELMO domain-containing protein E (elmoE), found in Dictyostelium discoideum (Social amoeba).